A 161-amino-acid polypeptide reads, in one-letter code: Arachidonate 5-lipoxygenase-activating protein (161 aa).

Residues 1–8 (MDQETVGN) lie on the Lumenal side of the membrane. Residues 9–30 (VVLLAIVTLISVVQNGFFAHKV) traverse the membrane as a helical segment. The Cytoplasmic portion of the chain corresponds to 31–52 (EHESRTQNGRSFQRTGTLAFER). The chain crosses the membrane as a helical span at residues 53–77 (VYTANQNCVDAYPTFLAVLWSAGLL). The Lumenal segment spans residues 78–80 (CSQ). A helical membrane pass occupies residues 81 to 102 (VPAAFAGLMYLLVRQKYFVGYL). Residues 103–107 (GERTQ) are Cytoplasmic-facing. Residues 108–115 (STPGYIFG) lie within the membrane without spanning it. A helical membrane pass occupies residues 116–128 (KRIILFLFLMSVA). Residues 129–161 (GIFNYYLIFFFGSDFENYIKTVTTTISPLLLIP) lie on the Lumenal side of the membrane.

Belongs to the MAPEG family. In terms of assembly, homotrimer. Interacts with LTC4S and ALOX5.

The protein localises to the nucleus membrane. It is found in the endoplasmic reticulum membrane. In terms of biological role, required for leukotriene biosynthesis by ALOX5 (5-lipoxygenase). Anchors ALOX5 to the membrane. Binds arachidonic acid, and could play an essential role in the transfer of arachidonic acid to ALOX5. Binds to MK-886, a compound that blocks the biosynthesis of leukotrienes. This is Arachidonate 5-lipoxygenase-activating protein (ALOX5AP) from Macaca fascicularis (Crab-eating macaque).